A 1409-amino-acid polypeptide reads, in one-letter code: DNA-directed RNA polymerase subunit beta' (1409 aa).

Zn(2+) is bound by residues C70, C72, C85, and C88. Mg(2+) is bound by residues D460, D462, and D464. The Zn(2+) site is built by C814, C888, C895, and C898.

This sequence belongs to the RNA polymerase beta' chain family. As to quaternary structure, the RNAP catalytic core consists of 2 alpha, 1 beta, 1 beta' and 1 omega subunit. When a sigma factor is associated with the core the holoenzyme is formed, which can initiate transcription. The cofactor is Mg(2+). Requires Zn(2+) as cofactor.

The enzyme catalyses RNA(n) + a ribonucleoside 5'-triphosphate = RNA(n+1) + diphosphate. DNA-dependent RNA polymerase catalyzes the transcription of DNA into RNA using the four ribonucleoside triphosphates as substrates. This Shewanella violacea protein is DNA-directed RNA polymerase subunit beta'.